Reading from the N-terminus, the 118-residue chain is Putative pterin-4-alpha-carbinolamine dehydratase (118 aa).

Belongs to the pterin-4-alpha-carbinolamine dehydratase family.

The catalysed reaction is (4aS,6R)-4a-hydroxy-L-erythro-5,6,7,8-tetrahydrobiopterin = (6R)-L-erythro-6,7-dihydrobiopterin + H2O. The sequence is that of Putative pterin-4-alpha-carbinolamine dehydratase from Azotobacter vinelandii (strain DJ / ATCC BAA-1303).